A 493-amino-acid chain; its full sequence is Dihydro-heme d1 dehydrogenase (493 aa).

Residues 1–18 (MRLIGLALGLLLGALAQA) form the signal peptide. Positions 19 to 96 (GEAPGEALYR…ALVAYLYQAP (78 aa)) constitute a Cytochrome c domain. The heme c site is built by Cys31, Cys34, His35, Arg68, and Met73. The interval 114-468 (PHPLATLPSR…YDAHSLEEVK (355 aa)) is D1-heme domain. Heme d1-binding residues include His165, Gly167, Lys169, Arg182, Arg207, Asn208, His341, Arg390, and His435. Residue Arg182 participates in heme c binding.

Belongs to the cytochrome c family. Monomer. Heme c is required as a cofactor.

The protein localises to the periplasm. It carries out the reaction dihydro-heme d1 + A = heme d1 + AH2. It functions in the pathway porphyrin-containing compound metabolism. In terms of biological role, involved in heme d1 biosynthesis. Catalyzes the introduction of a double bond into the propionate side chain of pyrrole ring D of dihydro-heme d1, therefore converting dihydro-heme d1 to heme d1. This chain is Dihydro-heme d1 dehydrogenase, found in Pseudomonas aeruginosa (strain ATCC 15692 / DSM 22644 / CIP 104116 / JCM 14847 / LMG 12228 / 1C / PRS 101 / PAO1).